A 367-amino-acid polypeptide reads, in one-letter code: Histidinol-phosphate aminotransferase (367 aa).

An N6-(pyridoxal phosphate)lysine modification is found at K226.

It belongs to the class-II pyridoxal-phosphate-dependent aminotransferase family. Histidinol-phosphate aminotransferase subfamily. In terms of assembly, homodimer. Pyridoxal 5'-phosphate is required as a cofactor.

The catalysed reaction is L-histidinol phosphate + 2-oxoglutarate = 3-(imidazol-4-yl)-2-oxopropyl phosphate + L-glutamate. It functions in the pathway amino-acid biosynthesis; L-histidine biosynthesis; L-histidine from 5-phospho-alpha-D-ribose 1-diphosphate: step 7/9. This Aliarcobacter butzleri (strain RM4018) (Arcobacter butzleri) protein is Histidinol-phosphate aminotransferase.